The primary structure comprises 419 residues: Transcription factor 7 (419 aa).

Over residues 1–12 the composition is skewed to gly residues; sequence MPQLDSGGGGAG. Residues 1 to 60 are CTNNB1-binding; that stretch reads MPQLDSGGGGAGRGDDLGAPDELLAFQDEGEEQDDKNRDSPVGPERDLAELKSSLVNESE. 2 disordered regions span residues 1-111 and 134-200; these read MPQL…LKAP and PASG…SGFY. 2 stretches are compositionally biased toward basic and acidic residues: residues 35-50 and 86-109; these read DKNR…DLAE and LGRE…DGLK. Pro residues predominate over residues 143-158; sequence QPQPPLHNKPGQPPHG. A DNA-binding region (HMG box) is located at residues 304 to 372; it reads IKKPLNAFML…LHMQLYPGWS (69 aa). The tract at residues 374–406 is disordered; sequence RDNYGKKKRRSREKHQESTTGGKRNAFGTYPEK. Positions 379 to 385 match the Nuclear localization signal motif; that stretch reads KKKRRSR.

This sequence belongs to the TCF/LEF family. As to quaternary structure, binds the armadillo repeat of CTNNB1 and forms a stable complex. Binds TLE5, TLE1, TLE2, TLE3 and TLE4. Interacts with MLLT11. Interacts with DAZAP2. Interacts (via N-terminus) with SOX13; inhibits WNT-mediated transcriptional activity. As to expression, T-cell specific. Expressed in triple negative 2 subpopulations of T-cells and both the gamma-delta and alpha-beta T-cell lineages. Expressed in Il7 receptor positive innate-like T-cells in the mesenteric lymph nodes and spleen (at protein level).

The protein resides in the nucleus. Functionally, transcriptional activator involved in T-cell lymphocyte differentiation. Necessary for the survival of CD4(+) CD8(+) immature thymocytes. Isoforms lacking the N-terminal CTNNB1 binding domain cannot fulfill this role. Binds to the T-lymphocyte-specific enhancer element (5'-WWCAAAG-3') found in the promoter of the CD3E gene. Represses expression of the T-cell receptor gamma gene in alpha-beta T-cell lineages. Inhibits the developmental program of IL17A effector gamma-delta T-cell subsets via regulating the transcription of T-cell lineage effector proteins. Required for the development of natural killer receptor-positive lymphoid tissue inducer T-cells. TLE1, TLE2, TLE3 and TLE4 repress transactivation mediated by TCF7 and CTNNB1. May also act as feedback transcriptional repressor of CTNNB1 and TCF7L2 target genes. The chain is Transcription factor 7 from Mus musculus (Mouse).